The chain runs to 496 residues: Glycerol kinase (496 aa).

Residue Thr12 coordinates ADP. ATP is bound by residues Thr12, Thr13, and Ser14. Sn-glycerol 3-phosphate is bound at residue Thr12. Residue Arg16 participates in ADP binding. The sn-glycerol 3-phosphate site is built by Arg82, Glu83, and Tyr134. Glycerol-binding residues include Arg82, Glu83, and Tyr134. His230 carries the post-translational modification Phosphohistidine; by HPr. Position 244 (Asp244) interacts with sn-glycerol 3-phosphate. Asp244 and Gln245 together coordinate glycerol. 2 residues coordinate ADP: Thr266 and Gly309. ATP contacts are provided by Thr266, Gly309, Gln313, and Gly410. 2 residues coordinate ADP: Gly410 and Asn414.

It belongs to the FGGY kinase family. In terms of assembly, homotetramer and homodimer (in equilibrium). The phosphoenolpyruvate-dependent sugar phosphotransferase system (PTS), including enzyme I, and histidine-containing protein (HPr) are required for the phosphorylation, which leads to the activation of the enzyme.

The enzyme catalyses glycerol + ATP = sn-glycerol 3-phosphate + ADP + H(+). Its pathway is polyol metabolism; glycerol degradation via glycerol kinase pathway; sn-glycerol 3-phosphate from glycerol: step 1/1. Activated by phosphorylation and inhibited by fructose 1,6-bisphosphate (FBP). Functionally, key enzyme in the regulation of glycerol uptake and metabolism. Catalyzes the phosphorylation of glycerol to yield sn-glycerol 3-phosphate. This Geobacillus sp. (strain WCH70) protein is Glycerol kinase.